The following is a 319-amino-acid chain: Glutathione synthetase (319 aa).

The ATP-grasp domain maps to 129–314 (KLAILNFSRF…VAAMFADAVA (186 aa)). 155-211 (LKEHGDIIIKPLDGMGGMGIFRLTEKDPNIGSILETLMQLDSRTIMAQRYIPEIVHG) provides a ligand contact to ATP. 2 residues coordinate Mg(2+): glutamate 285 and asparagine 287.

Belongs to the prokaryotic GSH synthase family. The cofactor is Mg(2+). It depends on Mn(2+) as a cofactor.

It carries out the reaction gamma-L-glutamyl-L-cysteine + glycine + ATP = glutathione + ADP + phosphate + H(+). Its pathway is sulfur metabolism; glutathione biosynthesis; glutathione from L-cysteine and L-glutamate: step 2/2. This Neisseria meningitidis serogroup B (strain ATCC BAA-335 / MC58) protein is Glutathione synthetase.